A 299-amino-acid chain; its full sequence is Taste receptor type 2 member 4 (299 aa).

Residues 1–9 (MLRLFYFSA) lie on the Extracellular side of the membrane. Residues 10 to 30 (IIASVILNFVGIIMNLFITVV) form a helical membrane-spanning segment. The Cytoplasmic segment spans residues 31–46 (NCKTWVKSHRISSSDR). Residues 47 to 67 (ILFSLGITRFLMLGLFLVNTI) traverse the membrane as a helical segment. Over 68 to 81 (YFVSSNXERSVYLS) the chain is Extracellular. Residues 82-102 (AFFVLCFMFLDSSSLWFVTLL) form a helical membrane-spanning segment. Over 103-131 (NILYCVKITNFQHSVFLLLKRNISPKIPR) the chain is Cytoplasmic. Residues 132–152 (LLLACVLISAFTTCLYITLSQ) form a helical membrane-spanning segment. At 153–172 (ASPFPELVTTRNNTSFNINE) the chain is on the extracellular side. N-linked (GlcNAc...) asparagine glycosylation is found at N164 and N165. Residues 173-193 (GILSLVVSLVLSSSLQFIINV) form a helical membrane-spanning segment. Residues 194 to 230 (TSASLLIHSLRRHIQKMQKNATGFWNPQTEAHVGAMK) are Cytoplasmic-facing. A helical membrane pass occupies residues 231–251 (LMVYFLILYIPYSVATLVQYL). Topologically, residues 252-262 (PFYAGMDMGTK) are extracellular. A helical membrane pass occupies residues 263–283 (SICLIFATLYSPGHSVLIIIT). Residues 284-299 (HPKLKTTAKKILCFKK) are Cytoplasmic-facing.

Belongs to the G-protein coupled receptor T2R family.

The protein localises to the membrane. It is found in the cell projection. It localises to the cilium membrane. Its function is as follows. Gustducin-coupled receptor implicated in the perception of bitter compounds in the oral cavity and the gastrointestinal tract. Signals through PLCB2 and the calcium-regulated cation channel TRPM5. In airway epithelial cells, binding of denatonium increases the intracellular calcium ion concentration and stimulates ciliary beat frequency. The sequence is that of Taste receptor type 2 member 4 (TAS2R4) from Pan troglodytes (Chimpanzee).